Consider the following 253-residue polypeptide: 5'/3'-nucleotidase SurE (253 aa).

Positions 8, 9, 39, and 92 each coordinate a divalent metal cation.

It belongs to the SurE nucleotidase family. A divalent metal cation serves as cofactor.

The protein resides in the cytoplasm. The catalysed reaction is a ribonucleoside 5'-phosphate + H2O = a ribonucleoside + phosphate. It carries out the reaction a ribonucleoside 3'-phosphate + H2O = a ribonucleoside + phosphate. The enzyme catalyses [phosphate](n) + H2O = [phosphate](n-1) + phosphate + H(+). Nucleotidase with a broad substrate specificity as it can dephosphorylate various ribo- and deoxyribonucleoside 5'-monophosphates and ribonucleoside 3'-monophosphates with highest affinity to 3'-AMP. Also hydrolyzes polyphosphate (exopolyphosphatase activity) with the preference for short-chain-length substrates (P20-25). Might be involved in the regulation of dNTP and NTP pools, and in the turnover of 3'-mononucleotides produced by numerous intracellular RNases (T1, T2, and F) during the degradation of various RNAs. The chain is 5'/3'-nucleotidase SurE from Shigella boydii serotype 18 (strain CDC 3083-94 / BS512).